The chain runs to 79 residues: Dicentracin (79 aa).

Positions 1–22 (MKCATLFLVLSMVVLMAEPGDA) are cleaved as a signal peptide. Position 44 is a glycine amide (Gly44). The propeptide occupies 47–79 (AQQDQQDQQYQQDQQDQQAEQYQRFNRERAAFD). A disordered region spans residues 48–67 (QQDQQDQQYQQDQQDQQAEQ).

It belongs to the pleurocidin family.

It localises to the secreted. The polypeptide is Dicentracin (Dicentrarchus labrax (European seabass)).